A 373-amino-acid polypeptide reads, in one-letter code: GDP-mannose 4,6 dehydratase 2 (373 aa).

The segment covering 1-15 (MASENNGSRSDSESI) has biased composition (polar residues). Residues 1 to 21 (MASENNGSRSDSESITAPKAD) form a disordered region. NADP(+) is bound by residues 35-40 (GITGQD), arginine 60, 91-92 (DL), 113-117 (LAAQS), and tyrosine 128. Serine 117 serves as a coordination point for substrate. Serine 162 lines the substrate pocket. Serine 162 is a catalytic residue. Catalysis depends on nucleophile residues glutamate 164 and tyrosine 185. Residue tyrosine 185 participates in substrate binding. Lysine 189 serves as a coordination point for NADP(+). Residue asparagine 214 coordinates substrate. NADP(+) contacts are provided by histidine 215 and arginine 220. Substrate is bound by residues 220-228 (RGENFVTRK), glycine 247, arginine 253, and 314-317 (RPAE).

The protein belongs to the NAD(P)-dependent epimerase/dehydratase family. GDP-mannose 4,6-dehydratase subfamily. In terms of assembly, homotetramer. Binds to GER1. NADP(+) serves as cofactor. In terms of tissue distribution, expressed in roots, flowers, siliques, leaves and stems. Not expressed in the root meristem and the proximal part of the elongation zone, or in emerging lateral roots. Expressed in trichomes and guard cells, and in pollen just before anthesis.

It catalyses the reaction GDP-alpha-D-mannose = GDP-4-dehydro-alpha-D-rhamnose + H2O. The protein operates within nucleotide-sugar biosynthesis; GDP-L-fucose biosynthesis via de novo pathway; GDP-L-fucose from GDP-alpha-D-mannose: step 1/2. In terms of biological role, catalyzes the conversion of GDP-D-mannose to GDP-4-dehydro-6-deoxy-D-mannose. This chain is GDP-mannose 4,6 dehydratase 2 (MUR1), found in Arabidopsis thaliana (Mouse-ear cress).